A 507-amino-acid chain; its full sequence is ATP synthase subunit alpha, chloroplastic (507 aa).

170–177 is a binding site for ATP; the sequence is GDRQTGKT.

It belongs to the ATPase alpha/beta chains family. F-type ATPases have 2 components, CF(1) - the catalytic core - and CF(0) - the membrane proton channel. CF(1) has five subunits: alpha(3), beta(3), gamma(1), delta(1), epsilon(1). CF(0) has four main subunits: a, b, b' and c.

It localises to the plastid. Its subcellular location is the chloroplast thylakoid membrane. It catalyses the reaction ATP + H2O + 4 H(+)(in) = ADP + phosphate + 5 H(+)(out). In terms of biological role, produces ATP from ADP in the presence of a proton gradient across the membrane. The alpha chain is a regulatory subunit. In Eucalyptus globulus subsp. globulus (Tasmanian blue gum), this protein is ATP synthase subunit alpha, chloroplastic.